The sequence spans 346 residues: Putative [LysW]-L-2-aminoadipate/[LysW]-L-glutamate phosphate reductase (346 aa).

12–15 is a binding site for NADP(+); sequence SGFT. Cysteine 147 is a catalytic residue. Asparagine 310 contacts NADP(+).

Belongs to the NAGSA dehydrogenase family. Type 1 subfamily. LysY sub-subfamily.

It localises to the cytoplasm. The enzyme catalyses [amino-group carrier protein]-C-terminal-N-(1-carboxy-5-oxopentan-1-yl)-L-glutamine + phosphate + NADP(+) = [amino-group carrier protein]-C-terminal-N-(1-carboxy-5-phosphooxy-5-oxopentan-1-yl)-L-glutamine + NADPH + H(+). It carries out the reaction [amino-group carrier protein]-C-terminal-gamma-(L-glutamyl-5-semialdehyde)-L-glutamate + phosphate + NADP(+) = [amino-group carrier protein]-C-terminal-gamma-(5-phospho-L-glutamyl)-L-glutamate + NADPH + H(+). It participates in amino-acid biosynthesis; L-lysine biosynthesis via AAA pathway; L-lysine from L-alpha-aminoadipate (Thermus route): step 3/5. The protein operates within amino-acid biosynthesis; L-arginine biosynthesis. Involved in both the arginine and lysine biosynthetic pathways. This Natronomonas pharaonis (strain ATCC 35678 / DSM 2160 / CIP 103997 / JCM 8858 / NBRC 14720 / NCIMB 2260 / Gabara) (Halobacterium pharaonis) protein is Putative [LysW]-L-2-aminoadipate/[LysW]-L-glutamate phosphate reductase.